The chain runs to 190 residues: Dual specificity protein phosphatase 21 (190 aa).

The 142-residue stretch at 21 to 162 folds into the Tyrosine-protein phosphatase domain; the sequence is SFSQITRSLF…LINYEFKLFN (142 aa). A sufficient for mitochondrial localization region spans residues 43–128; sequence LSSNRITAIV…AYLMKYHSMS (86 aa). Catalysis depends on cysteine 106, which acts as the Phosphocysteine intermediate.

Belongs to the protein-tyrosine phosphatase family. Non-receptor class dual specificity subfamily. As to quaternary structure, microtubule inner protein component of sperm flagellar doublet microtubules. In terms of tissue distribution, expressed in testis.

The protein resides in the cytoplasm. The protein localises to the nucleus. Its subcellular location is the mitochondrion inner membrane. It localises to the cytoskeleton. It is found in the flagellum axoneme. The enzyme catalyses O-phospho-L-tyrosyl-[protein] + H2O = L-tyrosyl-[protein] + phosphate. The catalysed reaction is O-phospho-L-seryl-[protein] + H2O = L-seryl-[protein] + phosphate. It catalyses the reaction O-phospho-L-threonyl-[protein] + H2O = L-threonyl-[protein] + phosphate. Its function is as follows. Protein phosphatase component of the sperm flagellar doublet microtubules. May act as a regulator of sperm motility by mediating dephosphorylation of sperm doublet microtubule proteins. Can dephosphorylate single and diphosphorylated synthetic MAPK peptides, with preference for the phosphotyrosine and diphosphorylated forms over phosphothreonine. The chain is Dual specificity protein phosphatase 21 (DUSP21) from Homo sapiens (Human).